A 237-amino-acid chain; its full sequence is MQKQAELYRGKAKTVYSTENPDLLVLEFRNDTSAGDGARIEQFDRKGMVNNKFNYFIMSKLAEAGIPTQMERLLSDTECLVKKLDMVPVECVVRNRAAGSLVKRLGIEEGIELNPPLFDLFLKNDAMHDPMVNESYCETFGWVSKENLARMKELTYKANDVLKKLFDDAGLILVDFKLEFGLYKGEVVLGDEFSPDGSRLWDKETLEKMDKDRFRQSLGGLIEAYEAVARRLGVQLD.

The protein belongs to the SAICAR synthetase family.

The enzyme catalyses 5-amino-1-(5-phospho-D-ribosyl)imidazole-4-carboxylate + L-aspartate + ATP = (2S)-2-[5-amino-1-(5-phospho-beta-D-ribosyl)imidazole-4-carboxamido]succinate + ADP + phosphate + 2 H(+). It functions in the pathway purine metabolism; IMP biosynthesis via de novo pathway; 5-amino-1-(5-phospho-D-ribosyl)imidazole-4-carboxamide from 5-amino-1-(5-phospho-D-ribosyl)imidazole-4-carboxylate: step 1/2. This is Phosphoribosylaminoimidazole-succinocarboxamide synthase from Escherichia coli O127:H6 (strain E2348/69 / EPEC).